The sequence spans 187 residues: Threonylcarbamoyl-AMP synthase (187 aa).

The region spanning 4-187 is the YrdC-like domain; it reads ILTLDNAVAT…DARSGQILRD (184 aa).

The protein belongs to the SUA5 family. TsaC subfamily.

Its subcellular location is the cytoplasm. The catalysed reaction is L-threonine + hydrogencarbonate + ATP = L-threonylcarbamoyladenylate + diphosphate + H2O. In terms of biological role, required for the formation of a threonylcarbamoyl group on adenosine at position 37 (t(6)A37) in tRNAs that read codons beginning with adenine. Catalyzes the conversion of L-threonine, HCO(3)(-)/CO(2) and ATP to give threonylcarbamoyl-AMP (TC-AMP) as the acyladenylate intermediate, with the release of diphosphate. This Xanthomonas oryzae pv. oryzae (strain MAFF 311018) protein is Threonylcarbamoyl-AMP synthase.